The primary structure comprises 156 residues: Cyclic pyranopterin monophosphate synthase (156 aa).

Residues 73–75 (LCH) and 110–111 (ME) each bind substrate. Residue Asp125 is part of the active site.

Belongs to the MoaC family. As to quaternary structure, homohexamer; trimer of dimers.

It catalyses the reaction (8S)-3',8-cyclo-7,8-dihydroguanosine 5'-triphosphate = cyclic pyranopterin phosphate + diphosphate. It participates in cofactor biosynthesis; molybdopterin biosynthesis. Catalyzes the conversion of (8S)-3',8-cyclo-7,8-dihydroguanosine 5'-triphosphate to cyclic pyranopterin monophosphate (cPMP). This is Cyclic pyranopterin monophosphate synthase from Pseudomonas entomophila (strain L48).